The primary structure comprises 219 residues: Ribonuclease HII (219 aa).

Residues 30 to 219 (RVIAGIDEAG…VREHVTCPSS (190 aa)) enclose the RNase H type-2 domain. Asp-36, Glu-37, and Asp-128 together coordinate a divalent metal cation.

This sequence belongs to the RNase HII family. Mn(2+) is required as a cofactor. Mg(2+) serves as cofactor.

The protein localises to the cytoplasm. It catalyses the reaction Endonucleolytic cleavage to 5'-phosphomonoester.. Its function is as follows. Endonuclease that specifically degrades the RNA of RNA-DNA hybrids. In Pelobacter propionicus (strain DSM 2379 / NBRC 103807 / OttBd1), this protein is Ribonuclease HII.